Consider the following 223-residue polypeptide: Serine/threonine/tyrosine-interacting protein (223 aa).

Residues 28–176 (EMQEVLPGLF…LQEYEAIYLA (149 aa)) enclose the Tyrosine-protein phosphatase domain. The Interaction with FBXW7 motif lies at 76–78 (FQQ). 2 positions are modified to phosphoserine: Ser-184 and Ser-201. The interval 199-223 (TGSVKRTHEEDDDFGNMQVATAQNG) is disordered.

It belongs to the protein-tyrosine phosphatase family. Non-receptor class subfamily. Interacts with MAPK1; independently of MAPK1 phosphorylation status. Interacts with CARHSP1/Crhsp-24. Interacts (via FQQ motif) with FBXW7 (via F-box domain); the interaction is direct and prevents FBXW7 interaction with SKP1, a component of the SCF(FBXW7) complex. Widely expressed with highest levels in muscle, testis and brain. In testis, expression starts 13-14 days after birth and is limited to the seminiferous tubule and to round and elongating spermatids. Expression is low in condensing spermatids and pachytene spermatocytes, and absent in spermatogonia, spermatozoa and somatic Sertoli cells.

The protein localises to the nucleus. The protein resides in the cytoplasm. It localises to the cytosol. Functionally, catalytically inactive phosphatase. Acts as a nuclear anchor for MAPK1/MAPK3 (ERK1/ERK2). Modulates cell-fate decisions and cell migration by spatiotemporal regulation of MAPK1/MAPK3 (ERK1/ERK2). By binding to the F-box of FBXW7, prevents the assembly of FBXW7 into the SCF E3 ubiquitin-protein ligase complex, and thereby inhibits degradation of its substrates. Plays a role in spermatogenesis. The protein is Serine/threonine/tyrosine-interacting protein of Mus musculus (Mouse).